Here is a 264-residue protein sequence, read N- to C-terminus: DNA repair protein RecO (264 aa).

Belongs to the RecO family.

Involved in DNA repair and RecF pathway recombination. The protein is DNA repair protein RecO of Leuconostoc citreum (strain KM20).